The primary structure comprises 338 residues: Ornithine carbamoyltransferase, catabolic (338 aa).

Carbamoyl phosphate is bound by residues 58 to 61 (STRT), Gln-85, Arg-109, and 136 to 139 (HPTQ). L-ornithine-binding positions include Asn-168, Asp-232, and 236–237 (SM). Residues 273–274 (CL) and Arg-318 each bind carbamoyl phosphate.

The protein belongs to the aspartate/ornithine carbamoyltransferase superfamily. OTCase family.

The protein localises to the cytoplasm. The enzyme catalyses carbamoyl phosphate + L-ornithine = L-citrulline + phosphate + H(+). The protein operates within amino-acid degradation; L-arginine degradation via ADI pathway; carbamoyl phosphate from L-arginine: step 2/2. Its function is as follows. Reversibly catalyzes the transfer of the carbamoyl group from carbamoyl phosphate (CP) to the N(epsilon) atom of ornithine (ORN) to produce L-citrulline. This chain is Ornithine carbamoyltransferase, catabolic, found in Streptococcus gordonii (strain Challis / ATCC 35105 / BCRC 15272 / CH1 / DL1 / V288).